The primary structure comprises 208 residues: LexA repressor (208 aa).

Residues 28-48 (VREIGEAVGLASSSTVHGHLA) constitute a DNA-binding region (H-T-H motif). Residues S130 and K168 each act as for autocatalytic cleavage activity in the active site.

This sequence belongs to the peptidase S24 family. As to quaternary structure, homodimer.

It carries out the reaction Hydrolysis of Ala-|-Gly bond in repressor LexA.. Functionally, represses a number of genes involved in the response to DNA damage (SOS response), including recA and lexA. In the presence of single-stranded DNA, RecA interacts with LexA causing an autocatalytic cleavage which disrupts the DNA-binding part of LexA, leading to derepression of the SOS regulon and eventually DNA repair. In Shouchella clausii (strain KSM-K16) (Alkalihalobacillus clausii), this protein is LexA repressor.